The primary structure comprises 225 residues: Enolase-phosphatase E1 (225 aa).

It belongs to the HAD-like hydrolase superfamily. MasA/MtnC family. In terms of assembly, monomer. It depends on Mg(2+) as a cofactor.

The enzyme catalyses 5-methylsulfanyl-2,3-dioxopentyl phosphate + H2O = 1,2-dihydroxy-5-(methylsulfanyl)pent-1-en-3-one + phosphate. It functions in the pathway amino-acid biosynthesis; L-methionine biosynthesis via salvage pathway; L-methionine from S-methyl-5-thio-alpha-D-ribose 1-phosphate: step 3/6. The protein operates within amino-acid biosynthesis; L-methionine biosynthesis via salvage pathway; L-methionine from S-methyl-5-thio-alpha-D-ribose 1-phosphate: step 4/6. Bifunctional enzyme that catalyzes the enolization of 2,3-diketo-5-methylthiopentyl-1-phosphate (DK-MTP-1-P) into the intermediate 2-hydroxy-3-keto-5-methylthiopentenyl-1-phosphate (HK-MTPenyl-1-P), which is then dephosphorylated to form the acireductone 1,2-dihydroxy-3-keto-5-methylthiopentene (DHK-MTPene). This chain is Enolase-phosphatase E1, found in Shewanella halifaxensis (strain HAW-EB4).